The sequence spans 322 residues: Secreted effector protein SseI (322 aa).

In terms of assembly, interacts with host IQGAP1 and host TRIP6 (thyroid receptor-interacting protein 6).

Its subcellular location is the secreted. It is found in the host cytoplasm. Its function is as follows. Effector proteins function to alter host cell physiology and promote bacterial survival in host tissues. This protein is required to maintain a long-term chronic systemic infection in mice. It inhibits normal cell migration of primary macrophages and dendritic cells, by a mechanism that involves interaction with the host factor IQGAP1, an important regulator of the cytoskeleton and cell migration. Also accelerates the systemic spread of infection from the gastrointestinal tract to the bloodstream, probably by interacting with host TRIP6. This chain is Secreted effector protein SseI (sseI), found in Salmonella typhimurium (strain LT2 / SGSC1412 / ATCC 700720).